The following is a 500-amino-acid chain: Protein FAM114A2 (500 aa).

The disordered stretch occupies residues 1–82 (MSNKDDLETA…AAGKETVSKD (82 aa)). Phosphoserine occurs at positions 93, 152, and 215.

It belongs to the FAM114 family.

The sequence is that of Protein FAM114A2 (FAM114A1) from Bos taurus (Bovine).